The following is a 372-amino-acid chain: Anhydro-N-acetylmuramic acid kinase (372 aa).

ATP is bound at residue 12-19; it reads GTSMDALD.

Belongs to the anhydro-N-acetylmuramic acid kinase family.

The enzyme catalyses 1,6-anhydro-N-acetyl-beta-muramate + ATP + H2O = N-acetyl-D-muramate 6-phosphate + ADP + H(+). It functions in the pathway amino-sugar metabolism; 1,6-anhydro-N-acetylmuramate degradation. The protein operates within cell wall biogenesis; peptidoglycan recycling. Its function is as follows. Catalyzes the specific phosphorylation of 1,6-anhydro-N-acetylmuramic acid (anhMurNAc) with the simultaneous cleavage of the 1,6-anhydro ring, generating MurNAc-6-P. Is required for the utilization of anhMurNAc either imported from the medium or derived from its own cell wall murein, and thus plays a role in cell wall recycling. The polypeptide is Anhydro-N-acetylmuramic acid kinase (Coxiella burnetii (strain CbuK_Q154) (Coxiella burnetii (strain Q154))).